The sequence spans 160 residues: CXXC motif containing zinc binding protein (160 aa).

Residues Cys-33, Cys-36, Cys-67, and Cys-70 each contribute to the Zn(2+) site. Residue Ser-75 is modified to Phosphoserine.

It belongs to the UPF0587 family. As to quaternary structure, monomer.

The chain is CXXC motif containing zinc binding protein (Czib) from Mus musculus (Mouse).